The primary structure comprises 309 residues: MSIRIVPKEQLGAQREKSTTAETIPPLLFANLKSLYSRRAERLRKLATDNPLGDYLNFAAQLAEAQHHALHDNPLTLDLTEELQQGAASGKPPLDLSVFPRSEHWHKLLVSLIAELRPQAPEHILAVLDNLEKASSHELELLADALLNQDFGKIGSEKAPFIWAALSLYWAQMAGLIPGKARAEYGEHRQFCPVCGSIPVSSVVHIGTVSGLRYLHCNLCESEWHVVRIKCSNCEQTRDLNYWSLDSELAAVKAESCGDCGTYLKILYQEKDPQVEAVADDLATLVLDAKMEDEGFARSSINPFLFPGS.

The protein belongs to the FdhE family.

Its subcellular location is the cytoplasm. Functionally, necessary for formate dehydrogenase activity. The sequence is that of Protein FdhE homolog from Serratia proteamaculans (strain 568).